Reading from the N-terminus, the 370-residue chain is Anhydro-N-acetylmuramic acid kinase (370 aa).

12–19 (GTSLDGVD) contributes to the ATP binding site.

Belongs to the anhydro-N-acetylmuramic acid kinase family.

It carries out the reaction 1,6-anhydro-N-acetyl-beta-muramate + ATP + H2O = N-acetyl-D-muramate 6-phosphate + ADP + H(+). Its pathway is amino-sugar metabolism; 1,6-anhydro-N-acetylmuramate degradation. It participates in cell wall biogenesis; peptidoglycan recycling. Functionally, catalyzes the specific phosphorylation of 1,6-anhydro-N-acetylmuramic acid (anhMurNAc) with the simultaneous cleavage of the 1,6-anhydro ring, generating MurNAc-6-P. Is required for the utilization of anhMurNAc either imported from the medium or derived from its own cell wall murein, and thus plays a role in cell wall recycling. The sequence is that of Anhydro-N-acetylmuramic acid kinase from Proteus mirabilis (strain HI4320).